The chain runs to 346 residues: Hydroxymethylglutaryl-CoA synthase (346 aa).

Aspartate 28 lines the (3S)-3-hydroxy-3-methylglutaryl-CoA pocket. Residue glutamate 80 is the Proton donor/acceptor of the active site. 2 residues coordinate (3S)-3-hydroxy-3-methylglutaryl-CoA: cysteine 112 and threonine 153. The Acyl-thioester intermediate role is filled by cysteine 112. Arginine 199 serves as a coordination point for CoA. (3S)-3-hydroxy-3-methylglutaryl-CoA-binding residues include threonine 201 and histidine 234. Residue histidine 234 is the Proton donor/acceptor of the active site. Residue lysine 239 participates in CoA binding. Residues arginine 243, asparagine 266, and serine 296 each contribute to the (3S)-3-hydroxy-3-methylglutaryl-CoA site.

This sequence belongs to the thiolase-like superfamily. Archaeal HMG-CoA synthase family. In terms of assembly, interacts with acetoacetyl-CoA thiolase that catalyzes the precedent step in the pathway and with a DUF35 protein. The acetoacetyl-CoA thiolase/HMG-CoA synthase complex channels the intermediate via a fused CoA-binding site, which allows for efficient coupling of the endergonic thiolase reaction with the exergonic HMGCS reaction.

The enzyme catalyses acetoacetyl-CoA + acetyl-CoA + H2O = (3S)-3-hydroxy-3-methylglutaryl-CoA + CoA + H(+). It participates in metabolic intermediate biosynthesis; (R)-mevalonate biosynthesis; (R)-mevalonate from acetyl-CoA: step 2/3. Its function is as follows. Catalyzes the condensation of acetyl-CoA with acetoacetyl-CoA to form 3-hydroxy-3-methylglutaryl-CoA (HMG-CoA). Functions in the mevalonate (MVA) pathway leading to isopentenyl diphosphate (IPP), a key precursor for the biosynthesis of isoprenoid compounds that are building blocks of archaeal membrane lipids. The sequence is that of Hydroxymethylglutaryl-CoA synthase from Methanosphaera stadtmanae (strain ATCC 43021 / DSM 3091 / JCM 11832 / MCB-3).